The chain runs to 241 residues: Polycomb group RING finger protein 3 (241 aa).

Residues Cys17 to Arg56 form an RING-type zinc finger. The segment at Ala115 to His148 is disordered. Basic and acidic residues predominate over residues Gln117–Glu139. The segment at Asn131–Leu241 is interaction with BCORL1.

As to quaternary structure, component of a PRC1-like complex that contains PCGF3, RNF2 and RYBP. Interacts with RNF2. Interacts with CBX6, CBX7 and CBX8. Interacts with BCORL1.

The protein resides in the nucleus. It localises to the nucleoplasm. In terms of biological role, component of a Polycomb group (PcG) multiprotein PRC1-like complex, a complex class required to maintain the transcriptionally repressive state of many genes, including Hox genes, throughout development. PcG PRC1 complex acts via chromatin remodeling and modification of histones; it mediates monoubiquitination of histone H2A 'Lys-119', rendering chromatin heritably changed in its expressibility. Within the PRC1-like complex, regulates RNF2 ubiquitin ligase activity. Plays a redundant role with PCGF5 as part of a PRC1-like complex that mediates monoubiquitination of histone H2A 'Lys-119' on the X chromosome and is required for normal silencing of one copy of the X chromosome in XX females. In Mus musculus (Mouse), this protein is Polycomb group RING finger protein 3 (PcgF3).